The following is a 33-amino-acid chain: Kappa-sparatoxin-Hv1a (33 aa).

Intrachain disulfides connect cysteine 2/cysteine 17, cysteine 9/cysteine 22, and cysteine 16/cysteine 27. Tryptophan 33 carries the tryptophan amide modification.

In terms of tissue distribution, expressed by the venom gland.

It localises to the secreted. In terms of biological role, blocks transient outward voltage-gated potassium channels in rat ventricular myocytes (thus prolonging action-potential duration) and rat Kv4.2/KCNA4 channels expressed in Xenopus oocytes. Is also a weak blocker of calcium channels in rat cerebellar granule cells. In Heteropoda venatoria (Brown huntsman spider), this protein is Kappa-sparatoxin-Hv1a.